The following is a 616-amino-acid chain: Pyrophosphate--fructose 6-phosphate 1-phosphotransferase subunit alpha (616 aa).

It belongs to the phosphofructokinase type A (PFKA) family. PPi-dependent PFK group II subfamily. Clade 'Long' sub-subfamily. In terms of assembly, tetramer of two alpha (regulatory) and two beta (catalytic) chains.

It is found in the cytoplasm. The protein operates within carbohydrate degradation; glycolysis; D-glyceraldehyde 3-phosphate and glycerone phosphate from D-glucose: step 3/4. With respect to regulation, allosterically activated by fructose 2,6-bisphosphate. In terms of biological role, regulatory subunit of pyrophosphate--fructose 6-phosphate 1-phosphotransferase. This chain is Pyrophosphate--fructose 6-phosphate 1-phosphotransferase subunit alpha, found in Solanum tuberosum (Potato).